The chain runs to 31 residues: Cyclotide mech-6 (31 aa).

Positions 1 to 31 (GVIPCGESCVFIPCISSVVGCTCKNKVCYRN) form a cross-link, cyclopeptide (Gly-Asn). Intrachain disulfides connect C5–C21, C9–C23, and C14–C28.

This is a cyclic peptide. In terms of processing, contains 3 disulfide bonds.

Probably participates in a plant defense mechanism (Potential). Binds to and induces leakage in phospholipd membranes, particularly ones containing 1-palmitoyl-2-oleophosphatidylethanolamine (POPE). This is Cyclotide mech-6 from Melicytus chathamicus (Chatham Island mahoe).